The chain runs to 32 residues: Dermaseptin-L1 (32 aa).

In terms of tissue distribution, expressed by the skin glands.

The protein localises to the secreted. Antimicrobial peptide active against the Gram-negative bacterium E.coli (MIC=8 uM) but inactive against the Gram-positive bacterium S.aureus. Also inhibits growth of zoospores of the chytrid fungus B.dendrobatidis at high concentrations (above 25 uM). Shows anticancer activities since it is cytolytic against HepG2 human hepatoma-derived cells (LC(50)=45 uM). Is only weakly hemolytic on human erythrocytes. This chain is Dermaseptin-L1, found in Agalychnis lemur (Lemur leaf frog).